The sequence spans 186 residues: Ribosome-recycling factor (186 aa).

This sequence belongs to the RRF family.

The protein localises to the cytoplasm. In terms of biological role, responsible for the release of ribosomes from messenger RNA at the termination of protein biosynthesis. May increase the efficiency of translation by recycling ribosomes from one round of translation to another. The chain is Ribosome-recycling factor from Cytophaga hutchinsonii (strain ATCC 33406 / DSM 1761 / CIP 103989 / NBRC 15051 / NCIMB 9469 / D465).